We begin with the raw amino-acid sequence, 1234 residues long: Coiled-coil domain-containing protein CG32809 (1234 aa).

Over residues 1–11 the composition is skewed to basic and acidic residues; sequence MLIRWKSKDKS. 3 disordered regions span residues 1–88, 107–129, and 330–350; these read MLIR…HAHQ, KNKK…FDDD, and KVSM…NYEE. Residues 12–25 are compositionally biased toward low complexity; the sequence is ASSNQSVGGSSSSS. A compositionally biased stretch (basic and acidic residues) spans 55–69; it reads GDERRRAMRRDDPRR. Positions 412–436 form a coiled coil; the sequence is HRIRVEHMERQLANLTGLVQKALVN. Residues 498–548 are disordered; sequence DIQGIPKSHNPLHAAETKPTKPAIKSSTLPRTSSQERDRLKPPPPPKPIVL. Coiled-coil stretches lie at residues 565-594 and 630-666; these read EVYN…SQAQ and TRIS…EVIN. 4 disordered regions span residues 754–793, 815–852, 928–1011, and 1028–1070; these read EQRL…ALSG, IAQQ…DESA, LHSY…PPNQ, and SANA…ESGN. 5 stretches are compositionally biased toward low complexity: residues 817–837, 952–965, 993–1004, 1028–1039, and 1046–1068; these read QQQQ…QHQQ, TSSS…GSSS, TSSRSPLASPTS, SANANANANSNA, and VGET…GNES. Positions 1077 to 1105 form a coiled coil; that stretch reads VALEMRHQELLKKQKMLQEQYQRLQQMSK.

The chain is Coiled-coil domain-containing protein CG32809 from Drosophila melanogaster (Fruit fly).